The sequence spans 246 residues: Phosphonates import ATP-binding protein PhnC (246 aa).

The 245-residue stretch at 2 to 246 folds into the ABC transporter domain; it reads IKFENVSKVY…ILDEVYRKEG (245 aa). 35 to 42 is an ATP binding site; sequence GTSGAGKS.

This sequence belongs to the ABC transporter superfamily. Phosphonates importer (TC 3.A.1.9.1) family. In terms of assembly, the complex is composed of two ATP-binding proteins (PhnC), two transmembrane proteins (PhnE) and a solute-binding protein (PhnD).

It localises to the cell membrane. It carries out the reaction phosphonate(out) + ATP + H2O = phosphonate(in) + ADP + phosphate + H(+). Part of the ABC transporter complex PhnCDE involved in phosphonates import. Responsible for energy coupling to the transport system. The sequence is that of Phosphonates import ATP-binding protein PhnC from Lactococcus lactis subsp. cremoris (strain SK11).